Here is a 507-residue protein sequence, read N- to C-terminus: Dolichyl pyrophosphate Man9GlcNAc2 alpha-1,3-glucosyltransferase (507 aa).

The Cytoplasmic portion of the chain corresponds to 1 to 2 (ME). Residues 3-23 (SWPWMAVVVLLGLTVRWTVSL) form a helical membrane-spanning segment. At 24–114 (SSYSGAGKPP…SQAHKLFMRA (91 aa)) the chain is on the lumenal side. N59 carries N-linked (GlcNAc...) asparagine glycosylation. The chain crosses the membrane as a helical span at residues 115-135 (TVLAADLLIYVPAVLLYCYSL). At 136–143 (KEISPKRK) the chain is on the cytoplasmic side. Residues 144–164 (IASALCILLYPGLILIDYGHF) form a helical membrane-spanning segment. At 165-172 (QYNSVSLG) the chain is on the lumenal side. Residues 173-193 (FALWGVLGVSWDWDLLGSLAF) form a helical membrane-spanning segment. Residues 194 to 229 (CLALNYKQMELYHSLPFFCFLLGKCFKKGLKGKGLA) are Cytoplasmic-facing. Residues 230–250 (LFIRIACTVLASFLLCWLPFL) traverse the membrane as a helical segment. Topologically, residues 251-297 (TEREHALQVVRRLFPVDRGLFEDKVANIWCSVNVFLKIKDTLPRHIQ) are lumenal. A helical membrane pass occupies residues 298–318 (IAISFCFTLLSLLPACIKLTV). The Cytoplasmic portion of the chain corresponds to 319–332 (RPSCKGFRFTLVSC). Residues 333–353 (ALSFFLFSFQVHEKSILLVSL) traverse the membrane as a helical segment. At 354-361 (PVCLVLTE) the chain is on the lumenal side. The chain crosses the membrane as a helical span at residues 362–382 (IPFMSTWFLLVSTFSMLPLLL). The Cytoplasmic segment spans residues 383–385 (KDE). The chain crosses the membrane as a helical span at residues 386–406 (LLLPSVVTVMAFVIACGTFFP). Residues 407-437 (MLENTSEEQLQLKSFAVSVRRHLPGFTFLPR) are Lumenal-facing. A helical membrane pass occupies residues 438–458 (IMQCLFLSSVITMVLLTILSV). Over 459 to 468 (TLDPPQKLPD) the chain is Cytoplasmic. A helical membrane pass occupies residues 469–489 (LFPVLICFVSCVNFVFFLVYF). The Lumenal portion of the chain corresponds to 490-507 (NIVIMWDSKNGRNRKKIE).

This sequence belongs to the ALG6/ALG8 glucosyltransferase family.

Its subcellular location is the endoplasmic reticulum membrane. It carries out the reaction an alpha-D-Man-(1-&gt;2)-alpha-D-Man-(1-&gt;2)-alpha-D-Man-(1-&gt;3)-[alpha-D-Man-(1-&gt;2)-alpha-D-Man-(1-&gt;3)-[alpha-D-Man-(1-&gt;2)-alpha-D-Man-(1-&gt;6)]-alpha-D-Man-(1-&gt;6)]-beta-D-Man-(1-&gt;4)-beta-D-GlcNAc-(1-&gt;4)-alpha-D-GlcNAc-diphospho-di-trans,poly-cis-dolichol + a di-trans,poly-cis-dolichyl beta-D-glucosyl phosphate = an alpha-D-Glc-(1-&gt;3)-alpha-D-Man-(1-&gt;2)-alpha-D-Man-(1-&gt;2)-alpha-D-Man-(1-&gt;3)-[alpha-D-Man-(1-&gt;2)-alpha-D-Man-(1-&gt;3)-[alpha-D-Man-(1-&gt;2)-alpha-D-Man-(1-&gt;6)]-alpha-D-Man-(1-&gt;6)]-beta-D-Man-(1-&gt;4)-beta-D-GlcNAc-(1-&gt;4)-alpha-D-GlcNAc-diphospho-di-trans,poly-cis-dolichol + a di-trans,poly-cis-dolichyl phosphate + H(+). The protein operates within protein modification; protein glycosylation. Dolichyl pyrophosphate Man9GlcNAc2 alpha-1,3-glucosyltransferase that operates in the biosynthetic pathway of dolichol-linked oligosaccharides, the glycan precursors employed in protein asparagine (N)-glycosylation. The assembly of dolichol-linked oligosaccharides begins on the cytosolic side of the endoplasmic reticulum membrane and finishes in its lumen. The sequential addition of sugars to dolichol pyrophosphate produces dolichol-linked oligosaccharides containing fourteen sugars, including two GlcNAcs, nine mannoses and three glucoses. Once assembled, the oligosaccharide is transferred from the lipid to nascent proteins by oligosaccharyltransferases. In the lumen of the endoplasmic reticulum, adds the first glucose residue from dolichyl phosphate glucose (Dol-P-Glc) onto the lipid-linked oligosaccharide intermediate Man(9)GlcNAc(2)-PP-Dol to produce Glc(1)Man(9)GlcNAc(2)-PP-Dol. Glc(1)Man(9)GlcNAc(2)-PP-Dol is a substrate for ALG8, the following enzyme in the biosynthetic pathway. This is Dolichyl pyrophosphate Man9GlcNAc2 alpha-1,3-glucosyltransferase from Mus musculus (Mouse).